Here is a 974-residue protein sequence, read N- to C-terminus: Translation initiation factor IF-2 (974 aa).

Disordered stretches follow at residues 67-86 (TRKH…ARTI), 101-133 (DVAE…RREA), and 146-385 (RQER…TFQA). Residues 105 to 114 (GAEQGQAQVA) show a composition bias toward low complexity. 2 stretches are compositionally biased toward basic and acidic residues: residues 121–133 (ELKR…RREA) and 146–181 (RQER…KRAA). The span at 182–197 (AEAAAAQQAAAQQAAE) shows a compositional bias: low complexity. Positions 210-261 (EEARAAAERAAQREAAKKAEDAAREAADKARAEQEEIRKRREAAEAEARAIR) are enriched in basic and acidic residues. Positions 313–329 (PAGATPATTQAPAAGAG) are enriched in low complexity. Gly residues predominate over residues 358 to 371 (SSGGVDRGWRGGPK). The tr-type G domain maps to 474–643 (PRPPVVTVMG…LLQAEVLELK (170 aa)). The G1 stretch occupies residues 483–490 (GHVDHGKT). 483 to 490 (GHVDHGKT) is a binding site for GTP. Residues 508-512 (GITQH) form a G2 region. Residues 529–532 (DTPG) form a G3 region. GTP is bound by residues 529–533 (DTPGH) and 583–586 (NKID). The G4 stretch occupies residues 583 to 586 (NKID). The interval 619-621 (SAK) is G5.

It belongs to the TRAFAC class translation factor GTPase superfamily. Classic translation factor GTPase family. IF-2 subfamily.

It is found in the cytoplasm. In terms of biological role, one of the essential components for the initiation of protein synthesis. Protects formylmethionyl-tRNA from spontaneous hydrolysis and promotes its binding to the 30S ribosomal subunits. Also involved in the hydrolysis of GTP during the formation of the 70S ribosomal complex. The chain is Translation initiation factor IF-2 from Burkholderia vietnamiensis (strain G4 / LMG 22486) (Burkholderia cepacia (strain R1808)).